The following is a 3790-amino-acid chain: Transcription-associated protein 1 (3790 aa).

HEAT repeat units lie at residues 98–136 (RQHVKTIITMMLKILKTDNEENVLVCLRIIIELHKHFRP), 335–381 (TDLR…HVRQ), 740–778 (DLLYQEFLPLLPNLLEGLNRLQSGFHKQHMRDLFVELCL), 1185–1223 (AKATYEVIHELVRHITSPNTIVREESMVLLKHIGTIQSK), 1332–1370 (IGYKEKIINIIFKVMESDKSELQTTAFHCMKHFITGVTL), and 1826–1864 (AIHKKIVLQVFHSLLKGHALEARSIVKQALDVLTPAMPL). In terms of domain architecture, FAT spans 2610–3173 (LLAYLGKSHN…YFPIRTLYLT (564 aa)). The PI3K/PI4K catalytic domain occupies 3429-3753 (MPRVEIVQKN…AVDIIMTRFN (325 aa)). Residues 3435 to 3441 (VQKNNTA) are G-loop. Positions 3616-3624 (NLTRLNADM) are catalytic loop. The segment at 3636 to 3661 (ISYFKFDVNDDKCQLNQHRPVPFRLT) is activation loop. Residues 3758–3790 (FDSIENKKISVLVQSATNIDNLCRMDPAWHPWL) enclose the FATC domain.

Belongs to the PI3/PI4-kinase family. TRA1 subfamily. In terms of assembly, component of the Tip60 chromatin-remodeling complex which contains the catalytic subunit Tip60 and the subunits Domino, Tra1, Brd8, E(Pc), DMAP1, Pontin, Reptin, Ing3, Act87E, BAP55, Mrg15, MrgBP, Gas41 and YL-1. Probable component of some SAGA complex. Interacts with Spt3, Gcn5, Ada3 and Ada2b. In terms of tissue distribution, ubiquitous.

Its subcellular location is the nucleus. It is found in the cytoplasm. The protein resides in the chromosome. Part of the Tip60 chromatin-remodeling complex which is involved in DNA repair. Upon induction of DNA double-strand breaks, this complex acetylates phosphorylated H2AV in nucleosomes and exchanges it with unmodified H2AV. During wing development, required for activity of Notch and its coactivator mam. Function in promoting mam function is likely to involve both the Tip60 and SAGA complexes. The sequence is that of Transcription-associated protein 1 (Nipped-A) from Drosophila melanogaster (Fruit fly).